The primary structure comprises 956 residues: Glutamyl aminopeptidase (956 aa).

Residues 1–21 are Cytoplasmic-facing; the sequence is MILEERSSWEGSKRYCIKTKH. A helical; Signal-anchor for type II membrane protein transmembrane segment spans residues 22-42; sequence VAIICAVVVAVGLIVGLSVGL. Residues 43 to 956 are Extracellular-facing; that stretch reads TRSCDSTEGM…IRNWFLDLNG (914 aa). Positions 48–87 are disordered; sequence STEGMTQGTTQGTTQAPSHLPPVTSPPEDQGVCPASEDES. A compositionally biased stretch (low complexity) spans 49–62; it reads TEGMTQGTTQGTTQ. N-linked (GlcNAc...) asparagine glycans are attached at residues asparagine 126 and asparagine 199. Glutamate 225 is a substrate binding site. N-linked (GlcNAc...) asparagine glycosylation is present at asparagine 326. 359–363 lines the substrate pocket; the sequence is GAMEN. Histidine 395 serves as a coordination point for Zn(2+). Catalysis depends on glutamate 396, which acts as the Proton acceptor. Histidine 399 and glutamate 418 together coordinate Zn(2+). Residues asparagine 556, asparagine 569, asparagine 599, asparagine 643, asparagine 647, asparagine 679, asparagine 764, asparagine 797, asparagine 802, and asparagine 829 are each glycosylated (N-linked (GlcNAc...) asparagine). Residue arginine 888 coordinates substrate.

The protein belongs to the peptidase M1 family. In terms of assembly, homodimer; disulfide-linked. The cofactor is Zn(2+).

It is found in the cell membrane. The catalysed reaction is Release of N-terminal glutamate (and to a lesser extent aspartate) from a peptide.. With respect to regulation, substrate specificity is modulated by calcium which enhances the enzymatic activity for cleavage of acidic residues while reducing its activity with basic residues. Inhibited by aminopeptidase inhibitors amastatin and bestatin. Functionally, regulates central hypertension through its calcium-modulated preference to cleave N-terminal acidic residues from peptides such as angiotensin II. This Bos taurus (Bovine) protein is Glutamyl aminopeptidase (ENPEP).